A 258-amino-acid chain; its full sequence is Deoxyribose-phosphate aldolase (258 aa).

Aspartate 102 acts as the Proton donor/acceptor in catalysis. Lysine 165 (schiff-base intermediate with acetaldehyde) is an active-site residue. The active-site Proton donor/acceptor is the lysine 199.

Belongs to the DeoC/FbaB aldolase family. DeoC type 2 subfamily.

Its subcellular location is the cytoplasm. It catalyses the reaction 2-deoxy-D-ribose 5-phosphate = D-glyceraldehyde 3-phosphate + acetaldehyde. The protein operates within carbohydrate degradation; 2-deoxy-D-ribose 1-phosphate degradation; D-glyceraldehyde 3-phosphate and acetaldehyde from 2-deoxy-alpha-D-ribose 1-phosphate: step 2/2. Its function is as follows. Catalyzes a reversible aldol reaction between acetaldehyde and D-glyceraldehyde 3-phosphate to generate 2-deoxy-D-ribose 5-phosphate. The sequence is that of Deoxyribose-phosphate aldolase from Vibrio campbellii (strain ATCC BAA-1116).